The chain runs to 216 residues: uncharacterized protein (216 aa).

A 4Fe-4S ferredoxin-type domain is found at 18–47 (PPDSPIEDRCGSCNICVDSCPTGALVQGGQ). [4Fe-4S] cluster-binding residues include Cys27, Cys30, Cys33, Cys37, Cys79, Cys82, and Cys86.

This is an uncharacterized protein from Geobacillus stearothermophilus (Bacillus stearothermophilus).